We begin with the raw amino-acid sequence, 204 residues long: Large ribosomal subunit protein bL25 (204 aa).

Belongs to the bacterial ribosomal protein bL25 family. CTC subfamily. In terms of assembly, part of the 50S ribosomal subunit; part of the 5S rRNA/L5/L18/L25 subcomplex. Contacts the 5S rRNA. Binds to the 5S rRNA independently of L5 and L18.

In terms of biological role, this is one of the proteins that binds to the 5S RNA in the ribosome where it forms part of the central protuberance. The chain is Large ribosomal subunit protein bL25 from Pseudomonas aeruginosa (strain LESB58).